The primary structure comprises 402 residues: Diaminopimelate decarboxylase (402 aa).

At Lys61 the chain carries N6-(pyridoxal phosphate)lysine. Residues Gly233 and 269 to 272 (EPGR) contribute to the pyridoxal 5'-phosphate site. The substrate site is built by Arg272, Arg304, Tyr308, Glu334, and Tyr360. Pyridoxal 5'-phosphate is bound at residue Tyr360.

Belongs to the Orn/Lys/Arg decarboxylase class-II family. LysA subfamily. Homodimer. The cofactor is pyridoxal 5'-phosphate.

It carries out the reaction meso-2,6-diaminopimelate + H(+) = L-lysine + CO2. Its pathway is amino-acid biosynthesis; L-lysine biosynthesis via DAP pathway; L-lysine from DL-2,6-diaminopimelate: step 1/1. Its function is as follows. Specifically catalyzes the decarboxylation of meso-diaminopimelate (meso-DAP) to L-lysine. In Thermoplasma acidophilum (strain ATCC 25905 / DSM 1728 / JCM 9062 / NBRC 15155 / AMRC-C165), this protein is Diaminopimelate decarboxylase.